A 1439-amino-acid chain; its full sequence is Fanconi anemia group D2 protein (1439 aa).

A Glycyl lysine isopeptide (Lys-Gly) (interchain with G-Cter in ubiquitin) cross-link involves residue K563.

This sequence belongs to the Fanconi anemia protein FANCD2 family. Homodimer; cannot be ubiquitinated and does not bind DNA. Part of a FANCI-FANCD2 heterodimeric complex that binds and scans dsDNA for DNA damage. Interacts directly with FANCE and FANCI. Interacts with USP1 and MEN1. The ubiquitinated form specifically interacts with BRCA1 and BLM. Both the nonubiquitinated and the monoubiquitinated forms interact with BRCA2; this interaction is mediated by phosphorylated FANCG and the complex also includes XCCR3. The ubiquitinated form specifically interacts with MTMR15/FAN1 (via UBZ-type zinc finger), leading to recruit MTMR15/FAN1 to sites of DNA damage. Interacts with DCLRE1B/Apollo. Interacts with POLN. Interacts with UHRF1 and UHRF2; these interactions promote FANCD2 activation. Monoubiquitinated on Lys-563 during S phase and upon genotoxic stress. Deubiquitinated by USP1 as cells enter G2/M, or once DNA repair is completed. Monoubiquitination prevents DNA release from the FANCI-FANCD2 complex. FANCD2 is only ubiquitinated in the FANCI-FANCD2 complex and the monoubiquitination of FANCD2 is promoted by phosphorylation of FANCI. Post-translationally, phosphorylated in response to various genotoxic stresses by ATM and/or ATR.

Its subcellular location is the nucleus. Required for maintenance of chromosomal stability. Promotes accurate and efficient pairing of homologs during meiosis. Involved in the repair of DNA double-strand breaks, both by homologous recombination and single-strand annealing. The FANCI-FANCD2 complex binds and scans double-stranded DNA (dsDNA) for DNA damage; this complex stalls at DNA junctions between double-stranded DNA and single-stranded DNA. May participate in S phase and G2 phase checkpoint activation upon DNA damage. Plays a role in preventing breakage and loss of missegregating chromatin at the end of cell division, particularly after replication stress. Required for the targeting, or stabilization, of BLM to non-centromeric abnormal structures induced by replicative stress. Promotes BRCA2/FANCD1 loading onto damaged chromatin. May also be involved in B-cell immunoglobulin isotype switching. This chain is Fanconi anemia group D2 protein, found in Gallus gallus (Chicken).